Consider the following 199-residue polypeptide: Holliday junction branch migration complex subunit RuvA (199 aa).

The tract at residues 1–64 (MIARLTGMLA…EDAISLFGFR (64 aa)) is domain I. The segment at 65–143 (TVAEKEFFQV…KMDVAPSTKE (79 aa)) is domain II. Positions 144–154 (AAPSEAPPEVA) are flexible linker. The segment at 154-199 (ADDVASALVNLGYKEAVVRKVLAEMAIESGASTEAVLRQALKILMK) is domain III.

It belongs to the RuvA family. Homotetramer. Forms an RuvA(8)-RuvB(12)-Holliday junction (HJ) complex. HJ DNA is sandwiched between 2 RuvA tetramers; dsDNA enters through RuvA and exits via RuvB. An RuvB hexamer assembles on each DNA strand where it exits the tetramer. Each RuvB hexamer is contacted by two RuvA subunits (via domain III) on 2 adjacent RuvB subunits; this complex drives branch migration. In the full resolvosome a probable DNA-RuvA(4)-RuvB(12)-RuvC(2) complex forms which resolves the HJ.

It localises to the cytoplasm. Functionally, the RuvA-RuvB-RuvC complex processes Holliday junction (HJ) DNA during genetic recombination and DNA repair, while the RuvA-RuvB complex plays an important role in the rescue of blocked DNA replication forks via replication fork reversal (RFR). RuvA specifically binds to HJ cruciform DNA, conferring on it an open structure. The RuvB hexamer acts as an ATP-dependent pump, pulling dsDNA into and through the RuvAB complex. HJ branch migration allows RuvC to scan DNA until it finds its consensus sequence, where it cleaves and resolves the cruciform DNA. This Geobacter metallireducens (strain ATCC 53774 / DSM 7210 / GS-15) protein is Holliday junction branch migration complex subunit RuvA.